The chain runs to 345 residues: tRNA N6-adenosine threonylcarbamoyltransferase (345 aa).

Residues H111 and H115 each contribute to the Fe cation site. Residues 134-138 (LVSGG), D167, G180, and N276 contribute to the substrate site. D304 provides a ligand contact to Fe cation.

The protein belongs to the KAE1 / TsaD family. It depends on Fe(2+) as a cofactor.

The protein resides in the cytoplasm. The catalysed reaction is L-threonylcarbamoyladenylate + adenosine(37) in tRNA = N(6)-L-threonylcarbamoyladenosine(37) in tRNA + AMP + H(+). Functionally, required for the formation of a threonylcarbamoyl group on adenosine at position 37 (t(6)A37) in tRNAs that read codons beginning with adenine. Is involved in the transfer of the threonylcarbamoyl moiety of threonylcarbamoyl-AMP (TC-AMP) to the N6 group of A37, together with TsaE and TsaB. TsaD likely plays a direct catalytic role in this reaction. The protein is tRNA N6-adenosine threonylcarbamoyltransferase of Alcanivorax borkumensis (strain ATCC 700651 / DSM 11573 / NCIMB 13689 / SK2).